The primary structure comprises 1015 residues: Cytosolic carboxypeptidase 1 (1015 aa).

Positions 384 to 462 are disordered; that stretch reads LPTATPSTPG…GALPKTTRLN (79 aa). Residues 416–451 show a composition bias toward acidic residues; that stretch reads EDGMDEEDEAFVRDDDDEGKDDRGSDDDDGKDDDEI. The region spanning 727–1013 is the Peptidase M14 domain; sequence YPYTYSFLNS…DLLHSFLEMT (287 aa). The Zn(2+) site is built by histidine 792, glutamate 795, and histidine 891. Residue glutamate 977 is the Proton donor/acceptor of the active site.

This sequence belongs to the peptidase M14 family. Requires Zn(2+) as cofactor. In terms of tissue distribution, in hermaphrodites and males, expressed in amphid and IL2 ciliated sensory neurons. In males, expressed in CEM head neurons, RnB and HOB tail neurons, and in gubernacular erector and retractor muscles.

It is found in the perikaryon. Its subcellular location is the cell projection. It localises to the cilium. The protein localises to the dendrite. In terms of biological role, catalyzes the deglutamylation of polyglutamate side chains generated by post-translational polyglutamylation of proteins such as tubulins. Via the deglutamylation of tubulin, regulates the localization and velocity of kinesin motors and the structural integrity of microtubules in sensory cilia. In male CEM sensory neurons, regulates the cilia release of bioactive extracellular vesicles. Also regulates microtubule dynamics in uterine muscle cells. The polypeptide is Cytosolic carboxypeptidase 1 (Caenorhabditis elegans).